A 270-amino-acid polypeptide reads, in one-letter code: MSETLKTQPYSKRAEVHPSPVARRLFNLMETKKTNLCASVDLTTTKEILDLLEKVGPYICLVKTHIDIVSDFSYEGTIVPLLALAKKYNFMIFEDRKFADIGNTVKSQYKGGVYQIAKWSDITNAHGVTGSGIVTGLKQAAEEVTDEPRGLLMLAELSSKGAIAHGKYTEETVEIAKTDKDFVIGFIAQNQMGGSDEGFDWIIMTPGVGLDDKGDALGQQYRTVSEVMSTGTDIIIVGRGLFGKGRDPSVEGERYMKAGWNAYLARTNQL.

Residues Asp41, 63 to 65 (KTH), 95 to 104 (DRKFADIGNT), Tyr221, and Arg239 contribute to the substrate site. The active-site Proton donor is the Lys97.

The protein belongs to the OMP decarboxylase family.

The enzyme catalyses orotidine 5'-phosphate + H(+) = UMP + CO2. The protein operates within pyrimidine metabolism; UMP biosynthesis via de novo pathway; UMP from orotate: step 2/2. This chain is Orotidine 5'-phosphate decarboxylase (URA3), found in Candida boidinii (Yeast).